A 510-amino-acid polypeptide reads, in one-letter code: 2,3-bisphosphoglycerate-independent phosphoglycerate mutase (510 aa).

D12 and S62 together coordinate Mn(2+). S62 (phosphoserine intermediate) is an active-site residue. Residues H123, R153–D154, R185, R191, R260–R263, and K335 contribute to the substrate site. Residues D402, H406, D443, H444, and H461 each contribute to the Mn(2+) site.

This sequence belongs to the BPG-independent phosphoglycerate mutase family. In terms of assembly, monomer. Mn(2+) is required as a cofactor.

The enzyme catalyses (2R)-2-phosphoglycerate = (2R)-3-phosphoglycerate. It functions in the pathway carbohydrate degradation; glycolysis; pyruvate from D-glyceraldehyde 3-phosphate: step 3/5. Catalyzes the interconversion of 2-phosphoglycerate and 3-phosphoglycerate. In Listeria welshimeri serovar 6b (strain ATCC 35897 / DSM 20650 / CCUG 15529 / CIP 8149 / NCTC 11857 / SLCC 5334 / V8), this protein is 2,3-bisphosphoglycerate-independent phosphoglycerate mutase.